The following is a 341-amino-acid chain: Biotin synthase (341 aa).

The Radical SAM core domain occupies 40 to 267; it reads AEIQVSTLLS…RSMVRLSAGR (228 aa). 3 residues coordinate [4Fe-4S] cluster: C55, C59, and C62. 4 residues coordinate [2Fe-2S] cluster: C99, C130, C190, and R262.

It belongs to the radical SAM superfamily. Biotin synthase family. Homodimer. [4Fe-4S] cluster serves as cofactor. Requires [2Fe-2S] cluster as cofactor.

The catalysed reaction is (4R,5S)-dethiobiotin + (sulfur carrier)-SH + 2 reduced [2Fe-2S]-[ferredoxin] + 2 S-adenosyl-L-methionine = (sulfur carrier)-H + biotin + 2 5'-deoxyadenosine + 2 L-methionine + 2 oxidized [2Fe-2S]-[ferredoxin]. The protein operates within cofactor biosynthesis; biotin biosynthesis; biotin from 7,8-diaminononanoate: step 2/2. In terms of biological role, catalyzes the conversion of dethiobiotin (DTB) to biotin by the insertion of a sulfur atom into dethiobiotin via a radical-based mechanism. This Xylella fastidiosa (strain M23) protein is Biotin synthase.